A 279-amino-acid chain; its full sequence is Presqualene diphosphate synthase (279 aa).

Belongs to the phytoene/squalene synthase family. HpnD subfamily.

It catalyses the reaction 2 (2E,6E)-farnesyl diphosphate = presqualene diphosphate + diphosphate. Its pathway is secondary metabolite biosynthesis; hopanoid biosynthesis. Involved in the biosynthesis of the hopanoid precursor squalene (SQ) from farnesyl diphosphate (FPP). Catalyzes the first step, the formation of presqualene diphosphate (PSPP) from two molecules of FPP. This Sinorhizobium fredii (strain NBRC 101917 / NGR234) protein is Presqualene diphosphate synthase.